The chain runs to 84 residues: Beta-defensin 119 (84 aa).

Residues Met1 to Gly21 form the signal peptide. Intrachain disulfides connect Cys28–Cys55, Cys35–Cys49, and Cys39–Cys56.

It belongs to the beta-defensin family.

Its subcellular location is the secreted. In terms of biological role, has antibacterial activity. The chain is Beta-defensin 119 (DEFB119) from Gorilla gorilla gorilla (Western lowland gorilla).